Consider the following 117-residue polypeptide: Large ribosomal subunit protein uL18 (117 aa).

It belongs to the universal ribosomal protein uL18 family. In terms of assembly, part of the 50S ribosomal subunit; part of the 5S rRNA/L5/L18/L25 subcomplex. Contacts the 5S and 23S rRNAs.

This is one of the proteins that bind and probably mediate the attachment of the 5S RNA into the large ribosomal subunit, where it forms part of the central protuberance. The chain is Large ribosomal subunit protein uL18 from Pectobacterium carotovorum subsp. carotovorum (strain PC1).